The primary structure comprises 155 residues: Ribonuclease H (155 aa).

The RNase H type-1 domain occupies 1-142 (MLKQVEIFTD…CDELARAAAM (142 aa)). Positions 10, 48, 70, and 134 each coordinate Mg(2+).

The protein belongs to the RNase H family. Monomer. It depends on Mg(2+) as a cofactor.

It is found in the cytoplasm. The catalysed reaction is Endonucleolytic cleavage to 5'-phosphomonoester.. Endonuclease that specifically degrades the RNA of RNA-DNA hybrids. The chain is Ribonuclease H from Escherichia fergusonii (strain ATCC 35469 / DSM 13698 / CCUG 18766 / IAM 14443 / JCM 21226 / LMG 7866 / NBRC 102419 / NCTC 12128 / CDC 0568-73).